The sequence spans 213 residues: Bcl-2-related ovarian killer protein (213 aa).

Residues 32–44 (KALCRDYINSRLI) carry the BH4 motif. Residues 67-83 (VSAILLRLGDELEYIRP) carry the BH3 motif. The BH1 motif lies at 113-132 (QIFTAGITWGKVVSLYAVAA). Positions 165-179 (WLKRRGGWADITKCV) match the BH2 motif. The helical transmembrane segment at 190–210 (WLVAAVCSFGHFLKAIFFVLL) threads the bilayer.

It belongs to the Bcl-2 family.

It is found in the membrane. May play a role in apoptosis. This chain is Bcl-2-related ovarian killer protein, found in Gallus gallus (Chicken).